The following is a 158-amino-acid chain: 6,7-dimethyl-8-ribityllumazine synthase (158 aa).

5-amino-6-(D-ribitylamino)uracil contacts are provided by residues Phe-18, 50 to 52 (SYD), and 74 to 76 (AVI). 79–80 (ET) is a (2S)-2-hydroxy-3-oxobutyl phosphate binding site. The active-site Proton donor is the His-82. A 5-amino-6-(D-ribitylamino)uracil-binding site is contributed by Leu-107. Residue Arg-122 participates in (2S)-2-hydroxy-3-oxobutyl phosphate binding.

It belongs to the DMRL synthase family.

It carries out the reaction (2S)-2-hydroxy-3-oxobutyl phosphate + 5-amino-6-(D-ribitylamino)uracil = 6,7-dimethyl-8-(1-D-ribityl)lumazine + phosphate + 2 H2O + H(+). It participates in cofactor biosynthesis; riboflavin biosynthesis; riboflavin from 2-hydroxy-3-oxobutyl phosphate and 5-amino-6-(D-ribitylamino)uracil: step 1/2. Functionally, catalyzes the formation of 6,7-dimethyl-8-ribityllumazine by condensation of 5-amino-6-(D-ribitylamino)uracil with 3,4-dihydroxy-2-butanone 4-phosphate. This is the penultimate step in the biosynthesis of riboflavin. The sequence is that of 6,7-dimethyl-8-ribityllumazine synthase from Sulfolobus acidocaldarius (strain ATCC 33909 / DSM 639 / JCM 8929 / NBRC 15157 / NCIMB 11770).